Here is a 418-residue protein sequence, read N- to C-terminus: Putative competence-damage inducible protein (418 aa).

The protein belongs to the CinA family.

This Streptococcus pneumoniae (strain CGSP14) protein is Putative competence-damage inducible protein.